A 393-amino-acid chain; its full sequence is UDP-galactose translocator (393 aa).

The next 10 membrane-spanning stretches (helical) occupy residues 3–23 (AVGS…AGAL), 37–57 (YISL…IRYA), 65–85 (FFAT…CLLL), 97–117 (LVLF…KLAV), 140–160 (TFQV…VLML), 169–189 (WASL…QAGG), 200–220 (GVGL…GVYF), 238–258 (LGLF…GTAV), 269–289 (PAVW…AVVV), and 315–335 (LFGF…IGAV). The segment at 353–393 (APTSGPCTHQQPPGQPPPPQLSSHHGDLSTEPFLPKSVLVK) is disordered.

It belongs to the nucleotide-sugar transporter family. SLC35A subfamily. In terms of assembly, interacts with SLC35A3; the interaction is reduced in the presence of SLC35A4. Found in a complex with SLC35A3 and SLC35A4.

The protein resides in the golgi apparatus membrane. The enzyme catalyses UMP(out) + UDP-alpha-D-galactose(in) = UMP(in) + UDP-alpha-D-galactose(out). The catalysed reaction is UDP-N-acetyl-alpha-D-galactosamine(in) + UMP(out) = UDP-N-acetyl-alpha-D-galactosamine(out) + UMP(in). It catalyses the reaction UMP(out) + UDP-alpha-D-glucose(in) = UMP(in) + UDP-alpha-D-glucose(out). It carries out the reaction UMP(out) + UDP-N-acetyl-alpha-D-glucosamine(in) = UMP(in) + UDP-N-acetyl-alpha-D-glucosamine(out). The enzyme catalyses UDP-alpha-D-galactose(in) + AMP(out) = UDP-alpha-D-galactose(out) + AMP(in). The catalysed reaction is UDP-alpha-D-galactose(in) + CMP(out) = UDP-alpha-D-galactose(out) + CMP(in). It catalyses the reaction UDP-N-acetyl-alpha-D-galactosamine(out) + UDP-alpha-D-galactose(in) = UDP-N-acetyl-alpha-D-galactosamine(in) + UDP-alpha-D-galactose(out). It carries out the reaction UDP-N-acetyl-alpha-D-glucosamine(out) + UDP-alpha-D-galactose(in) = UDP-N-acetyl-alpha-D-glucosamine(in) + UDP-alpha-D-galactose(out). The enzyme catalyses UDP-alpha-D-galactose(in) + UDP-alpha-D-glucose(out) = UDP-alpha-D-galactose(out) + UDP-alpha-D-glucose(in). The catalysed reaction is UMP(out) + CMP(in) = UMP(in) + CMP(out). It catalyses the reaction UMP(out) + AMP(in) = UMP(in) + AMP(out). Its function is as follows. Transports uridine diphosphate galactose (UDP-galactose) from the cytosol into the Golgi apparatus, functioning as an antiporter that exchanges UDP-galactose for UMP. It is also able to exchange UDP-galactose for AMP and CMP, and to transport UDP-N-acetylgalactosamine (UDP-GalNAc) and other nucleotide sugars. As a provider of UDP-galactose to galactosyltransferases present in the Golgi apparatus, it is necessary for globotriaosylceramide/globoside (Gb3Cer) synthesis from lactosylceramide. This Bos taurus (Bovine) protein is UDP-galactose translocator.